The following is a 430-amino-acid chain: BSD domain-containing protein 1 (430 aa).

Phosphoserine is present on residues Ser-92 and Ser-166. Positions 146-198 (WLSQFCLEEKKGEISELLVGSPSIRALYTKMVPAAVSHSEFWHRYFYKVHQLE) constitute a BSD domain. Disordered stretches follow at residues 247-298 (STFP…APEA) and 319-398 (LAVD…WEKD). A compositionally biased stretch (polar residues) spans 276 to 291 (PSESSESISLVTQIAN). Over residues 350–367 (PPARVETLREEAPTDLRV) the composition is skewed to basic and acidic residues. Thr-356 bears the Phosphothreonine mark. The segment covering 371–390 (NSDSGKSTPSNNGKKGSSTD) has biased composition (polar residues). A phosphoserine mark is found at Ser-387, Ser-388, and Ser-418.

This chain is BSD domain-containing protein 1 (BSDC1), found in Homo sapiens (Human).